Reading from the N-terminus, the 93-residue chain is UPF0473 protein RBAM_024480 (93 aa).

Belongs to the UPF0473 family.

The sequence is that of UPF0473 protein RBAM_024480 from Bacillus velezensis (strain DSM 23117 / BGSC 10A6 / LMG 26770 / FZB42) (Bacillus amyloliquefaciens subsp. plantarum).